A 312-amino-acid polypeptide reads, in one-letter code: Bifunctional pinoresinol-lariciresinol reductase 2 (312 aa).

Residues 11–17 (GGTGYIG), Arg36, and Lys45 contribute to the NADP(+) site. Lys138 functions as the Proton acceptor in the catalytic mechanism. Arg142 provides a ligand contact to NADP(+). His270 contacts substrate.

The protein belongs to the NmrA-type oxidoreductase family. Isoflavone reductase subfamily. In terms of assembly, dimer.

The catalysed reaction is (+)-lariciresinol + NADP(+) = (+)-pinoresinol + NADPH + H(+). The enzyme catalyses (-)-secoisolariciresinol + NADP(+) = (+)-lariciresinol + NADPH + H(+). It carries out the reaction (-)-lariciresinol + NADP(+) = (-)-pinoresinol + NADPH + H(+). In terms of biological role, reductase involved in lignan biosynthesis. Catalyzes the enantioselective sequential conversion of (+)-pinoresinol into (+)-lariciresinol and of (+)-lariciresinol into (-)-secoisolariciresinol. Can also convert with a lower efficiency (-)-pinoresinol into (-)-lariciresinol, but not (-)-lariciresinol into (+)-secoisolariciresinol. Abstracts the 4R-hydride from the NADPH cofactor during catalysis. This Thuja plicata (Western red-cedar) protein is Bifunctional pinoresinol-lariciresinol reductase 2 (PLR_Tp2).